A 40-amino-acid polypeptide reads, in one-letter code: Sulfur globule protein TR0 (40 aa).

To C.vinosum CV1 and CV2. The protein envelope of the sulfur globules is composed of the three different proteins TR0, TR1 and TR2.

Structural protein of the sulfur globules, which are intracellular globules that serve for sulfur storage in purple sulfur bacteria. This chain is Sulfur globule protein TR0, found in Thiocapsa roseopersicina.